A 436-amino-acid polypeptide reads, in one-letter code: UDP-N-acetylmuramate--L-alanine ligase (436 aa).

111–117 (GTHGKTS) serves as a coordination point for ATP.

The protein belongs to the MurCDEF family.

Its subcellular location is the cytoplasm. The enzyme catalyses UDP-N-acetyl-alpha-D-muramate + L-alanine + ATP = UDP-N-acetyl-alpha-D-muramoyl-L-alanine + ADP + phosphate + H(+). It functions in the pathway cell wall biogenesis; peptidoglycan biosynthesis. Functionally, cell wall formation. This chain is UDP-N-acetylmuramate--L-alanine ligase, found in Lactiplantibacillus plantarum (strain ATCC BAA-793 / NCIMB 8826 / WCFS1) (Lactobacillus plantarum).